The sequence spans 102 residues: Putative pterin-4-alpha-carbinolamine dehydratase (102 aa).

This sequence belongs to the pterin-4-alpha-carbinolamine dehydratase family.

The catalysed reaction is (4aS,6R)-4a-hydroxy-L-erythro-5,6,7,8-tetrahydrobiopterin = (6R)-L-erythro-6,7-dihydrobiopterin + H2O. This is Putative pterin-4-alpha-carbinolamine dehydratase from Burkholderia ambifaria (strain MC40-6).